The chain runs to 386 residues: Zinc finger protein 385A (386 aa).

The Matrin-type 1 zinc-finger motif lies at 74–98; sequence ISCNICQIRFNSQSQAEAHYKGNRH. A disordered region spans residues 90-193; that stretch reads EAHYKGNRHA…ASLPGGSKEE (104 aa). Residues 103–121 are compositionally biased toward basic and acidic residues; sequence KGIEAAKTRGREPGVREPG. The tract at residues 145–351 is necessary for binding to ITPR1, CEBPA and p53/TP53 mRNAs; sequence NGLGPAPGSP…AGSPLSLRPA (207 aa). At Ser185 the chain carries Phosphoserine. The segment at 201–225 adopts a Matrin-type 2 zinc-finger fold; sequence LYCALCKVAVNSLSQLEAHNKGTKH. Thr248 carries the phosphothreonine modification. The segment at 261–285 adopts a Matrin-type 3 zinc-finger fold; it reads FHCEICNVKVNSEVQLKQHISSRRH. A disordered region spans residues 279 to 309; sequence HISSRRHRDGVAGKPNPLLSRHKKSRGAGEL.

In terms of assembly, interacts with ELAVL1; the interaction is indirect, mRNA-dependent and may regulate p53/TP53 expression. Interacts with p53/TP53; the interaction is direct and enhances p53/TP53 transactivation functions on cell-cycle arrest target genes, resulting in growth arrest. Ubiquitinated upon prolonged exposure to genotoxic stress, which leads to proteasomal degradation of ZNF385A and releases p53/TP53 from cell-cycle arrest target gene promoters. As to expression, expressed predominantly in the retina.

Its subcellular location is the cytoplasm. The protein localises to the nucleus. It localises to the nucleolus. The protein resides in the cell projection. It is found in the dendrite. In terms of biological role, RNA-binding protein that affects the localization and the translation of a subset of mRNA. May play a role in adipogenesis through binding to the 3'-UTR of CEBPA mRNA and regulation of its translation. Targets ITPR1 mRNA to dendrites in Purkinje cells, and may regulate its activity-dependent translation. With ELAVL1, binds the 3'-UTR of p53/TP53 mRNAs to control their nuclear export induced by CDKN2A. Hence, may regulate p53/TP53 expression and mediate in part the CDKN2A anti-proliferative activity. May also bind CCNB1 mRNA. Alternatively, may also regulate p53/TP53 activity through direct protein-protein interaction. Interacts with p53/TP53 and promotes cell-cycle arrest over apoptosis enhancing preferentially the DNA binding and transactivation of p53/TP53 on cell-cycle arrest target genes over proapoptotic target genes. May also regulate the ubiquitination and stability of CDKN1A promoting DNA damage-induced cell cycle arrest. Also plays a role in megakaryocytes differentiation. This chain is Zinc finger protein 385A (ZNF385A), found in Homo sapiens (Human).